A 457-amino-acid chain; its full sequence is Phosphomethylpyrimidine synthase (457 aa).

Residues Asn80, Met109, Tyr139, His175, 195 to 197 (SRG), 236 to 239 (DSLR), and Glu275 each bind substrate. Residue His279 coordinates Zn(2+). Residue Tyr302 participates in substrate binding. Position 343 (His343) interacts with Zn(2+). [4Fe-4S] cluster contacts are provided by Cys423, Cys426, and Cys431.

It belongs to the ThiC family. It depends on [4Fe-4S] cluster as a cofactor.

The catalysed reaction is 5-amino-1-(5-phospho-beta-D-ribosyl)imidazole + S-adenosyl-L-methionine = 4-amino-2-methyl-5-(phosphooxymethyl)pyrimidine + CO + 5'-deoxyadenosine + formate + L-methionine + 3 H(+). It participates in cofactor biosynthesis; thiamine diphosphate biosynthesis. Functionally, catalyzes the synthesis of the hydroxymethylpyrimidine phosphate (HMP-P) moiety of thiamine from aminoimidazole ribotide (AIR) in a radical S-adenosyl-L-methionine (SAM)-dependent reaction. This chain is Phosphomethylpyrimidine synthase, found in Trichormus variabilis (strain ATCC 29413 / PCC 7937) (Anabaena variabilis).